Consider the following 210-residue polypeptide: LexA repressor (210 aa).

The segment at residues 31 to 51 (RVEISKELGFRSPNAAEEHLK) is a DNA-binding region (H-T-H motif). Active-site for autocatalytic cleavage activity residues include Ser-126 and Lys-163.

The protein belongs to the peptidase S24 family. In terms of assembly, homodimer.

It carries out the reaction Hydrolysis of Ala-|-Gly bond in repressor LexA.. Its function is as follows. Represses a number of genes involved in the response to DNA damage (SOS response), including recA and lexA. In the presence of single-stranded DNA, RecA interacts with LexA causing an autocatalytic cleavage which disrupts the DNA-binding part of LexA, leading to derepression of the SOS regulon and eventually DNA repair. In Histophilus somni (strain 129Pt) (Haemophilus somnus), this protein is LexA repressor.